Consider the following 262-residue polypeptide: MKVALKIAYDGTKFHGFQRQPNVRTVEGEIIKALNNSGIMFNELKSASRTDKGVSALGNVVAITTEDERITNPMILNAKLKDVWVLSAVKVPSDFHPRFWARSKVYRYYLPSFDLDVEKVKECSKLFLGVHDFSAFSRVDGRETVRSIDRIEVLDLGPVLAIEVEAKSFLWEMVRRIVKTLELCGLGKLSSEEVRKMLRGKFEKSRKVPPAPAEGLLLVEVKYKGIEFPIHDKALEKFRKDMEKRFREKIARAYLLWDMTKI.

The active-site Nucleophile is the aspartate 51. Substrate is bound at residue tyrosine 106.

It belongs to the tRNA pseudouridine synthase TruA family.

It carries out the reaction uridine(38/39/40) in tRNA = pseudouridine(38/39/40) in tRNA. In terms of biological role, formation of pseudouridine at positions 38, 39 and 40 in the anticodon stem and loop of transfer RNAs. The chain is tRNA pseudouridine synthase A from Pyrococcus horikoshii (strain ATCC 700860 / DSM 12428 / JCM 9974 / NBRC 100139 / OT-3).